Here is a 463-residue protein sequence, read N- to C-terminus: Glutamate--tRNA ligase 1 (463 aa).

The 'HIGH' region motif lies at 10 to 20 (PSPTGYLHIGG). Residues 238–242 (KLSKR) carry the 'KMSKS' region motif. Lysine 241 contributes to the ATP binding site.

The protein belongs to the class-I aminoacyl-tRNA synthetase family. Glutamate--tRNA ligase type 1 subfamily. Monomer.

Its subcellular location is the cytoplasm. The enzyme catalyses tRNA(Glu) + L-glutamate + ATP = L-glutamyl-tRNA(Glu) + AMP + diphosphate. Its function is as follows. Catalyzes the attachment of glutamate to tRNA(Glu) in a two-step reaction: glutamate is first activated by ATP to form Glu-AMP and then transferred to the acceptor end of tRNA(Glu). This Helicobacter pylori (strain HPAG1) protein is Glutamate--tRNA ligase 1.